A 433-amino-acid chain; its full sequence is Homeobox protein Hox-D3 (433 aa).

3 disordered regions span residues 44–198 (STPH…SKRV), 258–280 (GILH…AAGH), and 401–433 (HHGP…LTHL). Residues 58–74 (SLDSDYPSSACSIQSSA) are compositionally biased toward polar residues. Residues 97 to 106 (NSQGGGGGNQ) show a composition bias toward gly residues. Over residues 116–132 (PPQPPPPPPPTLPPSSP) the composition is skewed to pro residues. A compositionally biased stretch (low complexity) spans 146 to 159 (GGLSASSSSSTISK). Positions 161 to 166 (IFPWMK) match the Antp-type hexapeptide motif. Over residues 171-183 (NSKQKNSCATSGE) the composition is skewed to polar residues. The homeobox DNA-binding region spans 195–254 (SKRVRTAYTSAQLVELEKEFHFNRYLCRPRRVEMANLLNLTERQIKIWFQNRRMKYKKDQ).

The protein belongs to the Antp homeobox family. In terms of tissue distribution, detected in adult kidney, but not in other adult tissues tested.

Its subcellular location is the nucleus. Functionally, sequence-specific transcription factor which is part of a developmental regulatory system that provides cells with specific positional identities on the anterior-posterior axis. The chain is Homeobox protein Hox-D3 (Hoxd3) from Mus musculus (Mouse).